A 196-amino-acid polypeptide reads, in one-letter code: Proteasome subunit beta 2 (196 aa).

A propeptide spans 1–6 (MEELPS) (removed in mature form; by autocatalysis). Thr-7 functions as the Nucleophile in the catalytic mechanism.

The protein belongs to the peptidase T1B family. The 20S proteasome core is composed of 14 alpha and 14 beta subunits that assemble into four stacked heptameric rings, resulting in a barrel-shaped structure. The two inner rings, each composed of seven catalytic beta subunits, are sandwiched by two outer rings, each composed of seven alpha subunits. The catalytic chamber with the active sites is on the inside of the barrel. Has a gated structure, the ends of the cylinder being occluded by the N-termini of the alpha-subunits. Is capped at one or both ends by the proteasome regulatory ATPase, PAN.

The protein localises to the cytoplasm. It catalyses the reaction Cleavage of peptide bonds with very broad specificity.. Its activity is regulated as follows. The formation of the proteasomal ATPase PAN-20S proteasome complex, via the docking of the C-termini of PAN into the intersubunit pockets in the alpha-rings, triggers opening of the gate for substrate entry. Interconversion between the open-gate and close-gate conformations leads to a dynamic regulation of the 20S proteasome proteolysis activity. Its function is as follows. Component of the proteasome core, a large protease complex with broad specificity involved in protein degradation. The sequence is that of Proteasome subunit beta 2 from Metallosphaera sedula (strain ATCC 51363 / DSM 5348 / JCM 9185 / NBRC 15509 / TH2).